The primary structure comprises 1107 residues: Unconventional myosin-Ie (1107 aa).

Positions 19-692 (SGVDDMVLLS…SLFLLEEMRE (674 aa)) constitute a Myosin motor domain. ATP is bound at residue 112–119 (GESGAGKT). Residues 581–591 (PHYIRCIKPNE) form an actin-binding region. Residues 695–724 (YDGYARVIQKTWRKFVARKKYVQMREEASD) form the IQ domain. The TH1 domain occupies 730–922 (KERRRNSINR…NKVLQVSIGP (193 aa)). A disordered region spans residues 919–1052 (SIGPGLPKNS…KPQPKPKPQV (134 aa)). Polar residues-rich tracts occupy residues 979–989 (NQRSNQKSLYT) and 998–1012 (RQQS…QTPE). Phosphoserine is present on S1001. Residues 1034–1051 (RPPPAGGRPKPQPKPKPQ) show a composition bias toward pro residues. An SH3 domain is found at 1050-1107 (PQVPQCKALYAYDAQDTDELSFNANDIIDIIKEDPSGWWTGRLRGKQGLFPNNYVTKI).

Belongs to the TRAFAC class myosin-kinesin ATPase superfamily. Myosin family. As to quaternary structure, interacts with CALM and F-actin. Interacts (via SH3 domain) with SYNJ1, DNM1 and DNM2. Interacts with ARL14EP. Interacts with CARMIL1. In terms of tissue distribution, detected in kidney glomeruli (at protein level). Detected in utricle.

It localises to the cytoplasm. The protein resides in the cell junction. Its subcellular location is the cytoplasmic vesicle. The protein localises to the clathrin-coated vesicle. It is found in the cytoskeleton. Its function is as follows. Myosins are actin-based motor molecules with ATPase activity. Unconventional myosins serve in intracellular movements. Their highly divergent tails bind to membranous compartments, which are then moved relative to actin filaments. Binds to membranes containing anionic phospholipids via its tail domain. Involved in clathrin-mediated endocytosis and intracellular movement of clathrin-coated vesicles. Required for normal morphology of the glomerular basement membrane, normal development of foot processes by kidney podocytes and normal kidney function. In dendritic cells, may control the movement of class II-containing cytoplasmic vesicles along the actin cytoskeleton by connecting them with the actin network via ARL14EP and ARL14. The polypeptide is Unconventional myosin-Ie (Myo1e) (Mus musculus (Mouse)).